The sequence spans 145 residues: Holo-[acyl-carrier-protein] synthase (145 aa).

Residues aspartate 9 and glutamate 63 each contribute to the Mg(2+) site.

Belongs to the P-Pant transferase superfamily. AcpS family. Mg(2+) is required as a cofactor.

It is found in the cytoplasm. The catalysed reaction is apo-[ACP] + CoA = holo-[ACP] + adenosine 3',5'-bisphosphate + H(+). In terms of biological role, transfers the 4'-phosphopantetheine moiety from coenzyme A to a Ser of acyl-carrier-protein. The sequence is that of Holo-[acyl-carrier-protein] synthase from Burkholderia vietnamiensis (strain G4 / LMG 22486) (Burkholderia cepacia (strain R1808)).